Here is a 377-residue protein sequence, read N- to C-terminus: Chaperone protein DnaJ (377 aa).

The 65-residue stretch at aspartate 5 to glycine 69 folds into the J domain. Residues glycine 134–threonine 216 form a CR-type zinc finger. Residues cysteine 147, cysteine 150, cysteine 164, cysteine 167, cysteine 190, cysteine 193, cysteine 204, and cysteine 207 each contribute to the Zn(2+) site. CXXCXGXG motif repeat units lie at residues cysteine 147–glycine 154, cysteine 164–glycine 171, cysteine 190–glycine 197, and cysteine 204–glycine 211.

The protein belongs to the DnaJ family. As to quaternary structure, homodimer. The cofactor is Zn(2+).

The protein localises to the cytoplasm. In terms of biological role, participates actively in the response to hyperosmotic and heat shock by preventing the aggregation of stress-denatured proteins and by disaggregating proteins, also in an autonomous, DnaK-independent fashion. Unfolded proteins bind initially to DnaJ; upon interaction with the DnaJ-bound protein, DnaK hydrolyzes its bound ATP, resulting in the formation of a stable complex. GrpE releases ADP from DnaK; ATP binding to DnaK triggers the release of the substrate protein, thus completing the reaction cycle. Several rounds of ATP-dependent interactions between DnaJ, DnaK and GrpE are required for fully efficient folding. Also involved, together with DnaK and GrpE, in the DNA replication of plasmids through activation of initiation proteins. The polypeptide is Chaperone protein DnaJ (Listeria monocytogenes serotype 1/2a (strain 10403S)).